The sequence spans 178 residues: Disulfide bond formation protein B (178 aa).

The Cytoplasmic segment spans residues 1–14 (MLSFFKTLSMGRSG). A helical membrane pass occupies residues 15–31 (WLLLAFSALVLELVALY). The Periplasmic portion of the chain corresponds to 32–49 (FQYGMQLQPCVMCVYERV). A disulfide bridge links Cys41 with Cys44. The chain crosses the membrane as a helical span at residues 50-65 (ALGGILFAGIIGAIAP). Residues 66–72 (SSWFFRF) lie on the Cytoplasmic side of the membrane. Residues 73-90 (LGIIIGLGASVKGFLLAL) form a helical membrane-spanning segment. Residues 91 to 145 (KHVDYQLNPAPWNQCAYLPEFPQTLPLDQWFPYLFKPIGSCSDIQWSFLGFSMAQ) lie on the Periplasmic side of the membrane. Residues Cys105 and Cys131 are joined by a disulfide bond. Residues 146–164 (WILVMFAFYSILLAIILIS) form a helical membrane-spanning segment. The Cytoplasmic portion of the chain corresponds to 165–178 (QVKAGKPKHREIFR).

The protein belongs to the DsbB family.

It is found in the cell inner membrane. In terms of biological role, required for disulfide bond formation in some periplasmic proteins. Acts by oxidizing the DsbA protein. This Mannheimia succiniciproducens (strain KCTC 0769BP / MBEL55E) protein is Disulfide bond formation protein B.